The sequence spans 553 residues: MANPEVLVSSCRARQDESPCTFHPSSSPSEQLLLEDQMRRKLKFFFMNPCEKFWARGRKPWKLAIQILKIAMVTIQLVLFGLSNQMVVAFKEENTIAFKHLFLKGYMDRMDDTYAVYTQSEVYDQIIFAVTQYLQLQNISVGNHAYENKGTKQSAMAICQHFYRQGTICPGNDTFDIDPEVETECFLVEPDEASHLGTPGENKLNLSLDFHRLLTVELQFKLKAINLQTVRHQELPDCYDFTLTITFDNKAHSGRIKISLDNDISIKECKDWHVSGSIQKNTHYMMIFDAFVILTCLASLVLCARSVIRGLQLQQEFVNFFLLHYKKEVSASDQMEFINGWYIMIIISDILTIVGSVLKMEIQAKSLTSYDVCSILLGTSTMLVWLGVIRYLGFFAKYNLLILTLQAALPNVMRFCCCAAMIYLGYCFCGWIVLGPYHEKFRSLNRVSECLFSLINGDDMFSTFAKMQQKSYLVWLFSRVYLYSFISLFIYMILSLFIALITDTYETIKHYQQDGFPETELRKFIAECKDLPNSGKYRLEDDPPGSLLCCCKK.

Residues 1–62 (MANPEVLVSS…FWARGRKPWK (62 aa)) are Cytoplasmic-facing. The segment at 52–62 (KFWARGRKPWK) is interaction with phosphoinositides. The helical transmembrane segment at 63–83 (LAIQILKIAMVTIQLVLFGLS) threads the bilayer. The Extracellular portion of the chain corresponds to 84-283 (NQMVVAFKEE…VSGSIQKNTH (200 aa)). Residues 104–118 (KGYMDRMDDTYAVYT) are extracellular/lumenal pore loop. The N-linked (GlcNAc...) asparagine glycan is linked to N138. A disulfide bond links C159 and C185. The N-linked (GlcNAc...) asparagine glycan is linked to N205. A disulfide bridge connects residues C238 and C269. Residues 284-304 (YMMIFDAFVILTCLASLVLCA) form a helical membrane-spanning segment. Over 305-341 (RSVIRGLQLQQEFVNFFLLHYKKEVSASDQMEFINGW) the chain is Cytoplasmic. A helical membrane pass occupies residues 342-362 (YIMIIISDILTIVGSVLKMEI). Residues 363–371 (QAKSLTSYD) are Extracellular-facing. A helical membrane pass occupies residues 372–392 (VCSILLGTSTMLVWLGVIRYL). Topologically, residues 393–414 (GFFAKYNLLILTLQAALPNVMR) are cytoplasmic. The helical transmembrane segment at 415-435 (FCCCAAMIYLGYCFCGWIVLG) threads the bilayer. Topologically, residues 436–443 (PYHEKFRS) are extracellular. The segment at residues 444–464 (LNRVSECLFSLINGDDMFSTF) is an intramembrane region (pore-forming). Residues 456–459 (NGDD) carry the Selectivity filter motif. Topologically, residues 465–475 (AKMQQKSYLVW) are extracellular. A helical transmembrane segment spans residues 476 to 497 (LFSRVYLYSFISLFIYMILSLF). Residues 498-553 (IALITDTYETIKHYQQDGFPETELRKFIAECKDLPNSGKYRLEDDPPGSLLCCCKK) lie on the Cytoplasmic side of the membrane.

This sequence belongs to the transient receptor (TC 1.A.4) family. Polycystin subfamily. MCOLN3 sub-subfamily. As to quaternary structure, homotetramer. Can heterooligomerize with MCOLN1; heteromeric assemblies have different channel properties as compared to the respective homooligomers and may be tissue-specific. May heterooligomerize with TRPV5 to form a functional distinct ion channel. Interacts with GABARAPL2. N-glycosylated. In terms of tissue distribution, expressed in the cochlea; particularly in the inner and outer hair cells (at protein level).

It is found in the early endosome membrane. Its subcellular location is the late endosome membrane. The protein localises to the cytoplasmic vesicle. The protein resides in the autophagosome membrane. It localises to the cell projection. It is found in the stereocilium membrane. It catalyses the reaction Ca(2+)(in) = Ca(2+)(out). The catalysed reaction is Mg(2+)(in) = Mg(2+)(out). The enzyme catalyses K(+)(in) = K(+)(out). It carries out the reaction Na(+)(in) = Na(+)(out). Its activity is regulated as follows. Channel activity is activated by PtdIns(3,5)P2 (phosphatidylinositol 3,5-bisphosphate). Inhibited by lumenal H(+) and Na(+). The channel pore shows dynamic behavior and undergoes spontaneous, Ca(2+)-dependent modulation when conducting Ca(2+). Its function is as follows. Nonselective cation channel probably playing a role in the regulation of membrane trafficking events. Acts as a Ca(2+)-permeable cation channel with inwardly rectifying activity. Mediates release of Ca(2+) from endosomes to the cytoplasm, contributes to endosomal acidification and is involved in the regulation of membrane trafficking and fusion in the endosomal pathway. Also permeable to Mg(2+), Na(+) and K(+). Does not seem to act as mechanosensory transduction channel in inner ear sensory hair cells. Proposed to play a critical role at the cochlear stereocilia ankle-link region during hair-bundle growth. Involved in the regulation of autophagy. Through association with GABARAPL2 may be involved in autophagosome formation possibly providing Ca(2+) for the fusion process. Through a possible and probably tissue-specific heteromerization with MCOLN1 may be at least in part involved in many lysosome-dependent cellular events. Possible heteromeric ion channel assemblies with TRPV5 show pharmacological similarity with TRPML3. This Mus musculus (Mouse) protein is Mucolipin-3 (Mcoln3).